A 461-amino-acid polypeptide reads, in one-letter code: MAVSGTAAGTGLASTPRLFGTDGVRGIANRDLTAELALDLAVAAAHVLAQAGAFEGHRPLAVVGRDPRASGEFLEAAVVAGLASAGVDVLRLGVLPTPAVAYLTAALDADLGVVLSASHNPMPDNGIKFLARGGHKLPDDIEDAVAARLGEPWTRPVGRFVGRVRDYPEGLDQYVEHVLATSDQRLDGLRVVVDCAHGAASVVSPAVLRRAGATVVPIGCEPDGYNINDGHGSTNIETLQAAVRREGADAGIAHDGDADRCLAVDAAGDVVDGDQILAILALAWQEAGRLAHDTVVATVMSNLGLKLGLAAHGISVVETAVGDRYVLEAMRAGGYVLGGEQSGHIIMLDYATTGDGVLTGLQLLGRMAATGRPLADLARVVRRLPQVLRNVTGVDKTRVDTDPVINKELAAARGELGDGGRVLLRASGTEPVVRVMVEAETEADAERVAERLARVVRERLG.

The active-site Phosphoserine intermediate is the serine 118. 4 residues coordinate Mg(2+): serine 118, aspartate 255, aspartate 257, and aspartate 259. A Phosphoserine modification is found at serine 118.

It belongs to the phosphohexose mutase family. It depends on Mg(2+) as a cofactor. Post-translationally, activated by phosphorylation.

The enzyme catalyses alpha-D-glucosamine 1-phosphate = D-glucosamine 6-phosphate. Catalyzes the conversion of glucosamine-6-phosphate to glucosamine-1-phosphate. This is Phosphoglucosamine mutase from Acidothermus cellulolyticus (strain ATCC 43068 / DSM 8971 / 11B).